Reading from the N-terminus, the 394-residue chain is NAC domain-containing protein 26 (394 aa).

The NAC domain maps to 7-156; that stretch reads VPPGFRFHPT…GWVVCRVFKK (150 aa). A DNA-binding region spans residues 107-162; the sequence is IGMRKTLVFYKGRAPNGQKSDWIMHEYRLETSENGTPQEEGWVVCRVFKKKLAATV.

This sequence belongs to the plant vascular related NAC-domain protein family. In terms of assembly, interacts with NAC083/VNI2. Detected in root vessels of protoxylems, outermost metaxylems, inner metaxylems, shoots and hypocotyls. Expressed in roots, hypocotyls, cotyledons and leaves. Expressed in developing xylems. Specifically expressed in vessels in the secondary xylem of the root-hypocotyl region, and in vessels but not in interfascicular fibers in stems.

The protein resides in the nucleus. In terms of biological role, transcription activator that binds to the secondary wall NAC binding element (SNBE), 5'-(T/A)NN(C/T)(T/C/G)TNNNNNNNA(A/C)GN(A/C/T)(A/T)-3', in the promoter of target genes. Involved in xylem formation by promoting the expression of secondary wall-associated transcription factors and of genes involved in secondary wall biosynthesis and programmed cell death, genes driven by the secondary wall NAC binding element (SNBE). Triggers thickening of secondary walls. The chain is NAC domain-containing protein 26 from Arabidopsis thaliana (Mouse-ear cress).